Reading from the N-terminus, the 499-residue chain is Cytochrome P450 710A2 (499 aa).

Residues 5–25 (VSIFASLAPYLVSALLLFFLI) form a helical membrane-spanning segment. Cys-439 is a heme binding site.

The protein belongs to the cytochrome P450 family. Heme serves as cofactor. As to expression, expressed in the vascular tissues of roots, shoots, stems and leaves. Expressed in root tips, carpes, siliques and seeds.

It localises to the membrane. It carries out the reaction 5-dehydroepisterol + NADPH + O2 + H(+) = ergosta-5,7,22,24(28)-tetraen-3beta-ol + NADP(+) + 2 H2O. Its pathway is steroid biosynthesis; sterol biosynthesis. Its function is as follows. Required to form the C-22 double bond in the sterol side chain. Possesses in vitro C-22 desaturase activity toward 24-epi-campesterol and beta-sitosterol and produces brassicasterol and stigmasterol, respectively. No activity with campesterol. This chain is Cytochrome P450 710A2, found in Arabidopsis thaliana (Mouse-ear cress).